Reading from the N-terminus, the 712-residue chain is Phosphatase and actin regulator 4 (712 aa).

Disordered stretches follow at residues 1–22 (MGQA…GQPT) and 90–405 (RGLL…EVPK). Residues 72 to 97 (EVLERKISMRKPREELVKRGLLLEDS) form an RPEL 1 repeat. Polar residues predominate over residues 114 to 124 (NGHTTLIGSTR). Phosphoserine occurs at positions 125, 127, 140, and 156. Residues 136–152 (ERIASLRKPVPEEEPKK) show a composition bias toward basic and acidic residues. A compositionally biased stretch (low complexity) spans 198-230 (ATSSGSLARPSSSASTTAITTAPAATMAATNPA). Residues 233-243 (VHSSGPPSQAP) are compositionally biased toward polar residues. Over residues 245-267 (TLPAAPASTHTTATLSLTHTGPA) the composition is skewed to low complexity. Ser-282, Ser-303, and Ser-353 each carry phosphoserine. The span at 345-357 (SEPLLTPSSSPLP) shows a compositional bias: low complexity. Residues 358 to 371 (AHIPPEPPQSPPFP) show a composition bias toward pro residues. Phosphoserine is present on Ser-436. A Phosphothreonine modification is found at Thr-441. Residues Ser-452, Ser-462, Ser-473, Ser-524, Ser-526, Ser-567, and Ser-600 each carry the phosphoserine modification. Positions 507 to 557 (VIPKLPQCLQEEEEGKESDSDSEGPIQYRDEEDEDESHHSALANKVKRKDT) are disordered. The span at 516–528 (QEEEEGKESDSDS) shows a compositional bias: acidic residues. 2 RPEL repeats span residues 593–618 (NTLI…QPKN) and 631–656 (RRLT…RFNE). A disordered region spans residues 602–626 (RPTPEELEQRNILQPKNEADRQAEK). Ser-638 is subject to Phosphoserine.

Belongs to the phosphatase and actin regulator family. Binds PPP1CA and actin.

The protein localises to the cytoplasm. It is found in the cell projection. It localises to the lamellipodium. Regulator of protein phosphatase 1 (PP1) required for neural tube and optic fissure closure, and enteric neural crest cell (ENCCs) migration during development. Acts as an activator of PP1 by interacting with PPP1CA and preventing phosphorylation of PPP1CA at 'Thr-320'. During neural tube closure, localizes to the ventral neural tube and activates PP1, leading to down-regulate cell proliferation within cranial neural tissue and the neural retina. Also acts as a regulator of migration of enteric neural crest cells (ENCCs) by activating PP1, leading to dephosphorylation and subsequent activation of cofilin (COF1 or COF2) and repression of the integrin signaling through the RHO/ROCK pathway. The sequence is that of Phosphatase and actin regulator 4 (PHACTR4) from Bos taurus (Bovine).